A 360-amino-acid chain; its full sequence is Holliday junction branch migration complex subunit RuvB (360 aa).

The segment at 4–196 (HEEDLDQAEE…FGFTAHLEFY (193 aa)) is large ATPase domain (RuvB-L). ATP-binding positions include L35, R36, G77, K80, T81, T82, 143 to 145 (EDF), R186, Y196, and R233. Position 81 (T81) interacts with Mg(2+). Residues 197-267 (EPDELDLIVQ…VAQDALDLYE (71 aa)) form a small ATPAse domain (RuvB-S) region. Positions 270–360 (QLGLDRLDRG…PESDPPLFED (91 aa)) are head domain (RuvB-H). The DNA site is built by R306, R325, and R330.

Belongs to the RuvB family. Homohexamer. Forms an RuvA(8)-RuvB(12)-Holliday junction (HJ) complex. HJ DNA is sandwiched between 2 RuvA tetramers; dsDNA enters through RuvA and exits via RuvB. An RuvB hexamer assembles on each DNA strand where it exits the tetramer. Each RuvB hexamer is contacted by two RuvA subunits (via domain III) on 2 adjacent RuvB subunits; this complex drives branch migration. In the full resolvosome a probable DNA-RuvA(4)-RuvB(12)-RuvC(2) complex forms which resolves the HJ.

It is found in the cytoplasm. The enzyme catalyses ATP + H2O = ADP + phosphate + H(+). The RuvA-RuvB-RuvC complex processes Holliday junction (HJ) DNA during genetic recombination and DNA repair, while the RuvA-RuvB complex plays an important role in the rescue of blocked DNA replication forks via replication fork reversal (RFR). RuvA specifically binds to HJ cruciform DNA, conferring on it an open structure. The RuvB hexamer acts as an ATP-dependent pump, pulling dsDNA into and through the RuvAB complex. RuvB forms 2 homohexamers on either side of HJ DNA bound by 1 or 2 RuvA tetramers; 4 subunits per hexamer contact DNA at a time. Coordinated motions by a converter formed by DNA-disengaged RuvB subunits stimulates ATP hydrolysis and nucleotide exchange. Immobilization of the converter enables RuvB to convert the ATP-contained energy into a lever motion, pulling 2 nucleotides of DNA out of the RuvA tetramer per ATP hydrolyzed, thus driving DNA branch migration. The RuvB motors rotate together with the DNA substrate, which together with the progressing nucleotide cycle form the mechanistic basis for DNA recombination by continuous HJ branch migration. Branch migration allows RuvC to scan DNA until it finds its consensus sequence, where it cleaves and resolves cruciform DNA. The protein is Holliday junction branch migration complex subunit RuvB of Nocardioides sp. (strain ATCC BAA-499 / JS614).